A 614-amino-acid chain; its full sequence is Protein YehQ (614 aa).

2 SWIM-type zinc fingers span residues 55-89 (VRTQ…LSYQ) and 151-185 (SDVR…QAFV).

The polypeptide is Protein YehQ (yehQ) (Escherichia coli (strain K12)).